A 610-amino-acid polypeptide reads, in one-letter code: Glutamine--fructose-6-phosphate aminotransferase [isomerizing] (610 aa).

C2 (nucleophile; for GATase activity) is an active-site residue. Residues 2–220 (CGIISAISKK…EGDIAILSHK (219 aa)) form the Glutamine amidotransferase type-2 domain. SIS domains lie at 289–429 (AHAL…LKTN) and 461–600 (LAKE…IDKP). The active-site For Fru-6P isomerization activity is the K605.

In terms of assembly, homodimer.

Its subcellular location is the cytoplasm. It catalyses the reaction D-fructose 6-phosphate + L-glutamine = D-glucosamine 6-phosphate + L-glutamate. Catalyzes the first step in hexosamine metabolism, converting fructose-6P into glucosamine-6P using glutamine as a nitrogen source. This is Glutamine--fructose-6-phosphate aminotransferase [isomerizing] from Buchnera aphidicola subsp. Baizongia pistaciae (strain Bp).